Here is a 315-residue protein sequence, read N- to C-terminus: Probable cytochrome c oxidase subunit 2 (315 aa).

A run of 3 helical transmembrane segments spans residues 54 to 74 (IALI…PLPW), 96 to 116 (LLYI…FVCI), and 133 to 153 (VLIE…IAVP). Cu cation-binding residues include His235, Cys270, Cys274, and His278.

Belongs to the cytochrome c oxidase subunit 2 family. It depends on Cu cation as a cofactor. Heme is required as a cofactor.

The protein localises to the cell membrane. The catalysed reaction is 4 Fe(II)-[cytochrome c] + O2 + 8 H(+)(in) = 4 Fe(III)-[cytochrome c] + 2 H2O + 4 H(+)(out). Its function is as follows. Subunits I and II form the functional core of the enzyme complex. Electrons originating in cytochrome c are transferred via heme a and Cu(A) to the binuclear center formed by heme a3 and Cu(B). The sequence is that of Probable cytochrome c oxidase subunit 2 (ctaC) from Rickettsia conorii (strain ATCC VR-613 / Malish 7).